The following is a 546-amino-acid chain: Chaperonin GroEL 2 (546 aa).

Residues 30 to 33 (TLGP), Lys51, 87 to 91 (DGTTT), Gly415, 479 to 481 (NAA), and Asp495 contribute to the ATP site. Residues 524 to 546 (APKDAPPAQPAGVPGAGGTGFDF) are disordered. Positions 537–546 (PGAGGTGFDF) are enriched in gly residues.

It belongs to the chaperonin (HSP60) family. As to quaternary structure, forms a cylinder of 14 subunits composed of two heptameric rings stacked back-to-back. Interacts with the co-chaperonin GroES.

The protein localises to the cytoplasm. The catalysed reaction is ATP + H2O + a folded polypeptide = ADP + phosphate + an unfolded polypeptide.. Together with its co-chaperonin GroES, plays an essential role in assisting protein folding. The GroEL-GroES system forms a nano-cage that allows encapsulation of the non-native substrate proteins and provides a physical environment optimized to promote and accelerate protein folding. The protein is Chaperonin GroEL 2 of Burkholderia thailandensis (strain ATCC 700388 / DSM 13276 / CCUG 48851 / CIP 106301 / E264).